The chain runs to 433 residues: B3 domain-containing protein Os04g0676600 (433 aa).

Disordered stretches follow at residues 1–29 and 216–283; these read MADT…GGGQ and FPPV…NSAN. Residues 13–24 show a composition bias toward basic and acidic residues; the sequence is GDDRGREGHDDF. Residues 216–229 show a composition bias toward low complexity; that stretch reads FPPVSSSSRSFSSA. The span at 237 to 265 shows a compositional bias: basic and acidic residues; sequence DAKKAKKSDIKDQPIVLRRSDTESEKNDE. Polar residues predominate over residues 269 to 283; the sequence is TPASEPSSMSHNSAN. The segment at residues 297 to 399 is a DNA-binding region (TF-B3); the sequence is LRKELTNSDV…KLVVRGEKAI (103 aa).

It localises to the nucleus. Probable transcription regulator that binds specifically to the DNA sequence 5'-CATGC-3' of the IDE1 element found in the promoter of the barley iron deficiency-inducible gene IDS2. This is B3 domain-containing protein Os04g0676600 from Oryza sativa subsp. japonica (Rice).